The following is a 152-amino-acid chain: Dimethylsulfoniopropionate lyase DddW (152 aa).

One can recognise a Cupin type-2 domain in the interval 69–124 (IAEFGPGHQLRPHRHTPPEFYLGLEGSGIVTIDGVPHEIRAGVALYIPGDAEHGTV). Fe cation-binding residues include His-83, Glu-87, Tyr-89, and His-121.

This sequence belongs to the non-heme iron-dependent dioxygenase family. As to quaternary structure, homodimer. It depends on Fe(2+) as a cofactor.

It catalyses the reaction S,S-dimethyl-beta-propiothetin = acrylate + dimethyl sulfide + H(+). Functionally, able to cleave dimethylsulfoniopropionate (DMSP), releasing dimethyl sulfide (DMS) and acrylate. DMS is the principal form by which sulfur is transported from oceans to the atmosphere. The protein is Dimethylsulfoniopropionate lyase DddW of Ruegeria pomeroyi (strain ATCC 700808 / DSM 15171 / DSS-3) (Silicibacter pomeroyi).